The following is a 460-amino-acid chain: Ammonium transporter Rh type B-B (460 aa).

The Cytoplasmic portion of the chain corresponds to 1–10 (MTSYSTNMRI). The helical transmembrane segment at 11-31 (KLPLFCLLLQFITIILFAVFV) threads the bilayer. The Extracellular segment spans residues 32 to 62 (RYDHESDARGWHEELNNHSSSNADNDFYYRY). An N-linked (GlcNAc...) asparagine glycan is attached at asparagine 48. The chain crosses the membrane as a helical span at residues 63–83 (PSFQDVHVMIFIGFGFLMTFL). Residues 84 to 87 (KRYG) lie on the Cytoplasmic side of the membrane. Residues 88 to 108 (FSSVAFNFLIAAFGLQWSTLI) form a helical membrane-spanning segment. At 109–125 (QGFFHGFHDGKIHVGIE) the chain is on the extracellular side. Residues 126–146 (SMINADFCTGAVLISFGAVLG) traverse the membrane as a helical segment. At 147–150 (KTSP) the chain is on the cytoplasmic side. Residues 151–171 (VQLIIMTLVEVTLFGINEYII) traverse the membrane as a helical segment. The Extracellular portion of the chain corresponds to 172–179 (LNIVGAKD). A helical membrane pass occupies residues 180–202 (AGGSMTIHTFGAYFGLIVSRVLY). Over 203–220 (REDLEKSRQREGSVYHSD) the chain is Cytoplasmic. A helical membrane pass occupies residues 221-241 (LFAMIGTIYLWMFWPSFNSAV). Topologically, residues 242-252 (TAHGDDQHRTV) are extracellular. The chain crosses the membrane as a helical span at residues 253 to 273 (MNTYYSLAACTLATFGFSALL). The Cytoplasmic segment spans residues 274–283 (NGEGKLDMVH). Residues 284–304 (IQNAALAGGVAVGTSGEMMLT) traverse the membrane as a helical segment. A topological domain (extracellular) is located at residue proline 305. Residues 306-326 (FGAMIAGTLAGMISVLGYKYL) form a helical membrane-spanning segment. Topologically, residues 327 to 347 (TPVLDSKLKIQDTCGVHNLHG) are cytoplasmic. The chain crosses the membrane as a helical span at residues 348–368 (MPGILGAIIGAIVALFATADI). Residues 369–394 (YGDGMGDVFPLISDGSRTAKQQSLYQ) are Extracellular-facing. The chain crosses the membrane as a helical span at residues 395-415 (FLALLVALGFAIIGGTVVGFI). Residues 416 to 460 (LKLPIFGTPSDAECFEDAIYWEVPGGEGHQQLTVVINNEDPDTQA) are Cytoplasmic-facing.

The protein belongs to the ammonium transporter (TC 2.A.49) family. Rh subfamily.

It is found in the basolateral cell membrane. Its subcellular location is the cytoplasmic vesicle membrane. In terms of biological role, functions as a specific ammonium transporter. The polypeptide is Ammonium transporter Rh type B-B (rhbg-b) (Xenopus laevis (African clawed frog)).